We begin with the raw amino-acid sequence, 596 residues long: Elongation factor 4 (596 aa).

In terms of domain architecture, tr-type G spans 2 to 184 (KHIRNFSIIA…VIVEQIPPPE (183 aa)). Residues 14-19 (DHGKST) and 131-134 (NKID) each bind GTP.

It belongs to the TRAFAC class translation factor GTPase superfamily. Classic translation factor GTPase family. LepA subfamily.

The protein resides in the cell inner membrane. The enzyme catalyses GTP + H2O = GDP + phosphate + H(+). In terms of biological role, required for accurate and efficient protein synthesis under certain stress conditions. May act as a fidelity factor of the translation reaction, by catalyzing a one-codon backward translocation of tRNAs on improperly translocated ribosomes. Back-translocation proceeds from a post-translocation (POST) complex to a pre-translocation (PRE) complex, thus giving elongation factor G a second chance to translocate the tRNAs correctly. Binds to ribosomes in a GTP-dependent manner. This is Elongation factor 4 from Shewanella pealeana (strain ATCC 700345 / ANG-SQ1).